The following is a 254-amino-acid chain: Tumor necrosis factor ligand superfamily member 9 (254 aa).

Residues 1-28 lie on the Cytoplasmic side of the membrane; it reads MEYASDASLDPEAPWPPAPRARACRVLP. A helical; Signal-anchor for type II membrane protein transmembrane segment spans residues 29 to 49; the sequence is WALVAGLLLLLLLAAACAVFL. Residues 50–254 are Extracellular-facing; the sequence is ACPWAVSGAR…PAGLPSPRSE (205 aa). Positions 91 to 240 constitute a THD domain; sequence MFAQLVAQNV…GATVLGLFRV (150 aa).

The protein belongs to the tumor necrosis factor family. As to quaternary structure, homotrimer. As to expression, expressed in brain, placenta, lung, skeletal muscle and kidney.

The protein localises to the membrane. Its function is as follows. Cytokine that binds to TNFRSF9. Induces the proliferation of activated peripheral blood T-cells. May have a role in activation-induced cell death (AICD). May play a role in cognate interactions between T-cells and B-cells/macrophages. This chain is Tumor necrosis factor ligand superfamily member 9 (TNFSF9), found in Homo sapiens (Human).